A 397-amino-acid polypeptide reads, in one-letter code: Phosphoglycerate kinase (397 aa).

Residues Asp-21–Asn-23, Arg-36, His-59–Arg-62, Arg-118, and Arg-151 contribute to the substrate site. Residues Lys-202, Gly-293, Glu-324, and Gly-353–Ser-356 contribute to the ATP site.

Belongs to the phosphoglycerate kinase family. Monomer.

Its subcellular location is the cytoplasm. It carries out the reaction (2R)-3-phosphoglycerate + ATP = (2R)-3-phospho-glyceroyl phosphate + ADP. Its pathway is carbohydrate degradation; glycolysis; pyruvate from D-glyceraldehyde 3-phosphate: step 2/5. The protein is Phosphoglycerate kinase of Chloroherpeton thalassium (strain ATCC 35110 / GB-78).